A 1380-amino-acid chain; its full sequence is Tripeptidyl-peptidase 2 (1380 aa).

The 510-residue stretch at 110–619 folds into the Peptidase S8 domain; that stretch reads STFIASLMPK…QGLMQVDKAY (510 aa). Residues Asp-145, His-372, and Ser-558 each act as charge relay system in the active site. The interval 1099–1143 is disordered; the sequence is DEKEGKNPKDNPVSYPISYVVPPNKPEEDKKAASAPTCSKSVSER. Low complexity predominate over residues 1110–1120; that stretch reads PVSYPISYVVP. Coiled-coil stretches lie at residues 1152 to 1181 and 1238 to 1300; these read KIKFLGNLKQETEEERSEWRKLCTCLKSEY and EDDE…ELTK.

It belongs to the peptidase S8 family. Assembles into a large oligomeric complex containing two related proteins 153 and 142 kDa that are derived from the single TPP2 gene. The 142 kDa form mainly differs from the 153 kDa form by a truncation at the C-terminal end.

It carries out the reaction Release of an N-terminal tripeptide from a polypeptide.. Inhibited by alanine-alanine-phenylalanine-chloromethylketone, butabindide and phenylmethanesulfonyl fluoride (PMSF), but not by leupeptin, N-ethylmaleimide, EDTA, MG132 and lactacystin. Its function is as follows. Serine protease of the proteasome pathway that may function with the 20S proteasome to degrade oxidized proteins generated by environmental stress. The sequence is that of Tripeptidyl-peptidase 2 (TPP2) from Arabidopsis thaliana (Mouse-ear cress).